The following is a 113-amino-acid chain: Ig heavy chain V-III region E109 (113 aa).

One can recognise an Ig-like domain in the interval 1–113 (EVKLEESGGG…YWGQGTLVTV (113 aa)). A disulfide bond links Cys-22 and Cys-98.

This Mus musculus (Mouse) protein is Ig heavy chain V-III region E109.